Consider the following 130-residue polypeptide: Sulfurtransferase TusD (130 aa).

Catalysis depends on Cys80, which acts as the Cysteine persulfide intermediate.

The protein belongs to the DsrE/TusD family. As to quaternary structure, heterohexamer, formed by a dimer of trimers. The hexameric TusBCD complex contains 2 copies each of TusB, TusC and TusD. The TusBCD complex interacts with TusE.

It localises to the cytoplasm. Its function is as follows. Part of a sulfur-relay system required for 2-thiolation of 5-methylaminomethyl-2-thiouridine (mnm(5)s(2)U) at tRNA wobble positions. Accepts sulfur from TusA and transfers it in turn to TusE. In Sodalis glossinidius (strain morsitans), this protein is Sulfurtransferase TusD.